A 437-amino-acid polypeptide reads, in one-letter code: O-methyltransferase 3 (437 aa).

The interval M1–R21 is disordered. Residues S146–L180 are a coiled coil. Residues D408 to N437 form a disordered region. The span at N411–N437 shows a compositional bias: low complexity.

It belongs to the methyltransferase superfamily. METL family.

In terms of biological role, probable methyltransferase. This is O-methyltransferase 3 (omt3) from Dictyostelium discoideum (Social amoeba).